A 219-amino-acid polypeptide reads, in one-letter code: Octanoyltransferase (219 aa).

The BPL/LPL catalytic domain occupies 24 to 212 (KFRRECILFL…NLNSFLGPIS (189 aa)). Substrate is bound by residues 69–76 (RGGDFTAH), 140–142 (SIG), and 153–155 (GVA). Cys171 functions as the Acyl-thioester intermediate in the catalytic mechanism.

It belongs to the LipB family.

It is found in the cytoplasm. The enzyme catalyses octanoyl-[ACP] + L-lysyl-[protein] = N(6)-octanoyl-L-lysyl-[protein] + holo-[ACP] + H(+). It functions in the pathway protein modification; protein lipoylation via endogenous pathway; protein N(6)-(lipoyl)lysine from octanoyl-[acyl-carrier-protein]: step 1/2. Its function is as follows. Catalyzes the transfer of endogenously produced octanoic acid from octanoyl-acyl-carrier-protein onto the lipoyl domains of lipoate-dependent enzymes. Lipoyl-ACP can also act as a substrate although octanoyl-ACP is likely to be the physiological substrate. This is Octanoyltransferase from Leptospira borgpetersenii serovar Hardjo-bovis (strain JB197).